The sequence spans 83 residues: EMBRYO SURROUNDING FACTOR 1.1 (83 aa).

The signal sequence occupies residues 1 to 22; the sequence is MKSSHTSLICILMLSLVALHQC. 4 disulfide bridges follow: Cys41/Cys56, Cys46/Cys75, Cys54/Cys71, and Cys57/Cys64.

The protein belongs to the MEG family. Expressed exclusively in ovule embryo sacs and in early developing endosperms.

Maternally-contributed central cell peptide regulating suspensor development and correct auxin distribution in early developing embryos. This is EMBRYO SURROUNDING FACTOR 1.1 (ESF1.1) from Arabidopsis thaliana (Mouse-ear cress).